The sequence spans 74 residues: UPF0435 protein BAA_0470 (74 aa).

Belongs to the UPF0435 family.

This Bacillus anthracis (strain A0248) protein is UPF0435 protein BAA_0470.